The chain runs to 429 residues: C4-dicarboxylate transport protein (429 aa).

The next 8 helical transmembrane spans lie at 9–29 (VLYVQVIFAIIVGVILGHYYP), 45–65 (LIKMVIGPIIFCTVVTGIAGM), 79–99 (LLYFEIVSTFALLLGLAATHI), 149–169 (GEILQILLIALLFGSVLAHLG), 185–205 (VLFGIVHIVTKLAPIGAFGAM), 223–243 (LIGTFYLTSVVFVLVVLGTIA), 308–328 (IYMTMAVLFIAQATNIELTWM), and 356–376 (AATLAVVPTIPLSGMVLILGI).

This sequence belongs to the dicarboxylate/amino acid:cation symporter (DAACS) (TC 2.A.23) family.

The protein resides in the cell inner membrane. Responsible for the transport of dicarboxylates such as succinate, fumarate, and malate from the periplasm across the membrane. In Burkholderia lata (strain ATCC 17760 / DSM 23089 / LMG 22485 / NCIMB 9086 / R18194 / 383), this protein is C4-dicarboxylate transport protein.